A 295-amino-acid polypeptide reads, in one-letter code: Sulfotransferase 1 family member D1 (295 aa).

48-53 (KSGTTW) provides a ligand contact to 3'-phosphoadenylyl sulfate. Substrate contacts are provided by residues Phe-81 and 106–108 (KTH). His-108 acts as the Proton acceptor in catalysis. 3'-phosphoadenylyl sulfate contacts are provided by Arg-130 and Ser-138. Position 142 (Phe-142) interacts with substrate. 3'-phosphoadenylyl sulfate is bound by residues Tyr-193, Ser-227, and 257–259 (RKG).

Belongs to the sulfotransferase 1 family.

It is found in the cytoplasm. Its function is as follows. Sulfotransferase with broad substrate specificity that utilizes 3'-phospho-5'-adenylyl sulfate (PAPS) as sulfonate donor to catalyze the sulfate conjugation of catecholamines, such as dopamine, prostaglandins, leukotriene E4, drugs and xenobiotic compounds. Has sulfotransferase activity towards p-nitrophenol, 2-naphthylamine and minoxidil (in vitro). Sulfonation increases the water solubility of most compounds, and therefore their renal excretion, but it can also result in bioactivation to form active metabolites. This Rattus norvegicus (Rat) protein is Sulfotransferase 1 family member D1 (Sult1d1).